Reading from the N-terminus, the 94-residue chain is Citrate lyase acyl carrier protein (94 aa).

Ser-14 carries the post-translational modification O-(phosphoribosyl dephospho-coenzyme A)serine.

It belongs to the CitD family. Oligomer with a subunit composition of (alpha,beta,gamma)6.

It is found in the cytoplasm. Functionally, covalent carrier of the coenzyme of citrate lyase. The sequence is that of Citrate lyase acyl carrier protein from Fusobacterium nucleatum subsp. nucleatum (strain ATCC 25586 / DSM 15643 / BCRC 10681 / CIP 101130 / JCM 8532 / KCTC 2640 / LMG 13131 / VPI 4355).